A 363-amino-acid polypeptide reads, in one-letter code: Cytoplasmic envelopment protein 2 (363 aa).

This sequence belongs to the herpesviridae cytoplasmic envelopment protein 2 family. Interacts with cytoplasmic envelopment protein 3 and with the capsid.

It localises to the virion tegument. It is found in the host cytoplasm. The protein resides in the host nucleus. Plays a critical role in cytoplasmic virus egress. Participates in the final step of tegumentation and envelope acquisition within the host cytoplasm by directly interacting with the capsid. Upon virion binding to target cell, a signaling cascade is triggered to disrupt the interaction with the capsid, thereby preparing capsid uncoating. This Varicella-zoster virus (strain Dumas) (HHV-3) protein is Cytoplasmic envelopment protein 2 (44).